The following is a 422-amino-acid chain: C-type lectin domain family 4 member M (422 aa).

Topologically, residues 1 to 49 (MSDSKEPRVQPLGLLEEDPTTSGIRLFPRDFQFQQTHGHKSSTGCLGHG) are cytoplasmic. The Endocytosis signal signature appears at 14–15 (LL). The chain crosses the membrane as a helical; Signal-anchor for type II membrane protein span at residues 50-70 (PLVLQLLSFALLAGVLVAILV). The Extracellular portion of the chain corresponds to 71–422 (QVYKVPSSLS…KKPIACFRDE (352 aa)). N-linked (GlcNAc...) asparagine glycosylation is present at Asn92. A run of 8 repeats spans residues 108-130 (KLQE…PEKS), 131-151 (KQQE…ELPE), 154-176 (QLQE…PEES), 177-199 (RLQE…PEKS), 200-222 (RLQE…PEKS), 223-245 (RLQE…PEKS), 246-268 (KLQE…PDQS), and 269-291 (KQQQ…CCRC). An 8 X approximate tandem repeats region spans residues 108-292 (KLQEIYQELT…AFERLCCRCP (185 aa)). Disulfide bonds link Cys288–Cys418, Cys291–Cys302, Cys319–Cys412, and Cys391–Cys404. One can recognise a C-type lectin domain in the interval 297 to 413 (FFQGNCYFMS…CNVDNYWICK (117 aa)). Ca(2+) is bound by residues Glu382, Asn384, Ser386, Glu389, Asn400, and Asp401. N-linked (GlcNAc...) asparagine glycosylation occurs at Asn384.

Homotetramer.

It is found in the membrane. Probable pathogen-recognition receptor involved in peripheral immune surveillance in liver. May mediate the endocytosis of pathogens which are subsequently degraded in lysosomal compartments. Probably recognizes in a calcium-dependent manner high mannose N-linked oligosaccharides in a variety of pathogen antigens. Is a receptor for ICAM3, probably by binding to mannose-like carbohydrates. This Symphalangus syndactylus (Siamang) protein is C-type lectin domain family 4 member M (CLEC4M).